The sequence spans 511 residues: ADP,ATP carrier protein 4 (511 aa).

The next 12 membrane-spanning stretches (helical) occupy residues valine 34–isoleucine 54, isoleucine 70–tyrosine 90, isoleucine 102–phenylalanine 122, phenylalanine 157–tryptophan 177, phenylalanine 192–glutamate 212, phenylalanine 231–isoleucine 251, leucine 296–lysine 316, alanine 330–leucine 350, phenylalanine 361–valine 381, leucine 390–isoleucine 410, leucine 453–serine 473, and serine 476–threonine 496.

This sequence belongs to the ADP/ATP translocase tlc family.

The protein localises to the cell membrane. Provides the rickettsial cell with host ATP in exchange for rickettsial ADP. This is an obligate exchange system. This energy acquiring activity is an important component of rickettsial parasitism. The protein is ADP,ATP carrier protein 4 (tlcD) of Rickettsia conorii (strain ATCC VR-613 / Malish 7).